A 34-amino-acid chain; its full sequence is Photosystem II reaction center protein Psb30 (34 aa).

The chain crosses the membrane as a helical span at residues 6-26 (IVAQLLSLALVTLSGPAVIFL).

This sequence belongs to the Psb30/Ycf12 family. As to quaternary structure, PSII is composed of 1 copy each of membrane proteins PsbA, PsbB, PsbC, PsbD, PsbE, PsbF, PsbH, PsbI, PsbJ, PsbK, PsbL, PsbM, PsbT, PsbX, PsbY, PsbZ, Psb30/Ycf12, peripheral proteins of the oxygen-evolving complex and a large number of cofactors. It forms dimeric complexes.

The protein resides in the plastid. It is found in the chloroplast thylakoid membrane. In terms of biological role, a core subunit of photosystem II (PSII), probably helps stabilize the reaction center. The protein is Photosystem II reaction center protein Psb30 of Emiliania huxleyi (Coccolithophore).